The following is a 329-amino-acid chain: Isopenicillin N synthase (329 aa).

Isopenicillin N contacts are provided by Arg87, Tyr91, Ser183, and Tyr189. Residues Arg87, Tyr91, Ser183, Tyr189, His212, and Asp214 each coordinate N-[(5S)-5-amino-5-carboxypentanoyl]-L-cysteinyl-D-valine. The Fe2OG dioxygenase domain occupies 180 to 286; the sequence is TLSSVSLIRY…RLSLPFFLNA (107 aa). The Fe(2+) site is built by His212, Asp214, and His268. Arg277 is a binding site for 2-oxoglutarate. Ser279 contacts isopenicillin N. Ser279 lines the N-[(5S)-5-amino-5-carboxypentanoyl]-L-cysteinyl-D-valine pocket.

Belongs to the iron/ascorbate-dependent oxidoreductase family. The cofactor is Fe cation. It depends on L-ascorbate as a cofactor.

It catalyses the reaction N-[(5S)-5-amino-5-carboxypentanoyl]-L-cysteinyl-D-valine + O2 = isopenicillin N + 2 H2O. It participates in antibiotic biosynthesis; penicillin G biosynthesis; penicillin G from L-alpha-aminoadipate and L-cysteine and L-valine: step 2/3. Functionally, removes, in the presence of oxygen, 4 hydrogen atoms from delta-L-(alpha-aminoadipyl)-L-cysteinyl-D-valine (ACV) to form the azetidinone and thiazolidine rings of isopenicillin. This is Isopenicillin N synthase (pcbC) from Streptomyces jumonjinensis.